The chain runs to 375 residues: Lipid droplet hydrolase 1 (375 aa).

The AB hydrolase-1 domain occupies 88–358; that stretch reads VFVFVPGLAG…CSHNLCFDRP (271 aa). The active-site Charge relay system is S177. Residues 373–375 carry the Microbody targeting signal motif; the sequence is SKL.

It belongs to the AB hydrolase superfamily. Lipase family.

The protein localises to the lipid droplet. The enzyme catalyses a triacylglycerol + H2O = a diacylglycerol + a fatty acid + H(+). In terms of biological role, serine hydrolase required for the maintenance of steady state level of non-polar and polar lipids of lipid droplets and thus plays a role in maintaining the lipids homeostasis. Exhibits both esterase and triacylglycerol lipase activity. The protein is Lipid droplet hydrolase 1 of Saccharomyces cerevisiae (strain ATCC 204508 / S288c) (Baker's yeast).